The following is a 164-amino-acid chain: Phospholipase A and acyltransferase 4 (164 aa).

The essential for its ability regulate keratinocyte differentiation stretch occupies residues 1 to 40 (MASPHQEPKPGDLIEIFRLGYEHWALYIGDGYVIHLAPPS). Residues 1–134 (MASPHQEPKP…SRCKQVEKAK (134 aa)) are Cytoplasmic-facing. Residues 13–129 (LIEIFRLGYE…LRYGKSRCKQ (117 aa)) enclose the LRAT domain. Residues His-23 and His-35 contribute to the active site. Cys-113 (acyl-thioester intermediate) is an active-site residue. The segment at 124–164 (KSRCKQVEKAKVEVGVATALGILVVAGCSFAIRRYQKKATA) is interaction with TGM1. The chain crosses the membrane as a helical span at residues 135–155 (VEVGVATALGILVVAGCSFAI). The Lumenal segment spans residues 156–164 (RRYQKKATA).

It belongs to the H-rev107 family. Interacts with TGM1. As to expression, widely expressed.

The protein resides in the membrane. The enzyme catalyses a 1,2-diacyl-sn-glycero-3-phosphocholine + H2O = a 1-acyl-sn-glycero-3-phosphocholine + a fatty acid + H(+). It catalyses the reaction a 1,2-diacyl-sn-glycero-3-phosphocholine + H2O = a 2-acyl-sn-glycero-3-phosphocholine + a fatty acid + H(+). The catalysed reaction is 1,2-dihexadecanoyl-sn-glycero-3-phosphocholine + H2O = 1-hexadecanoyl-sn-glycero-3-phosphocholine + hexadecanoate + H(+). It carries out the reaction 1,2-dihexadecanoyl-sn-glycero-3-phosphocholine + H2O = 2-hexadecanoyl-sn-glycero-3-phosphocholine + hexadecanoate + H(+). The enzyme catalyses 1-hexadecanoyl-2-(9Z-octadecenoyl)-sn-glycero-3-phosphocholine + H2O = 2-(9Z-octadecenoyl)-sn-glycero-3-phosphocholine + hexadecanoate + H(+). It catalyses the reaction 1-hexadecanoyl-2-(9Z-octadecenoyl)-sn-glycero-3-phosphocholine + H2O = 1-hexadecanoyl-sn-glycero-3-phosphocholine + (9Z)-octadecenoate + H(+). The catalysed reaction is 1-hexadecanoyl-2-(5Z,8Z,11Z,14Z-eicosatetraenoyl)-sn-glycero-3-phosphocholine + H2O = 2-(5Z,8Z,11Z,14Z)-eicosatetraenoyl-sn-glycero-3-phosphocholine + hexadecanoate + H(+). It carries out the reaction 1-hexadecanoyl-2-(9Z,12Z-octadecadienoyl)-sn-glycero-3-phosphoethanolamine + H2O = 1-hexadecanoyl-sn-glycero-3-phosphoethanolamine + (9Z,12Z)-octadecadienoate + H(+). The enzyme catalyses 1-hexadecanoyl-2-(9Z,12Z-octadecadienoyl)-sn-glycero-3-phosphoethanolamine + H2O = 2-(9Z,12Z)-octadecadienoyl-sn-glycero-3-phosphoethanolamine + hexadecanoate + H(+). It catalyses the reaction 1-hexadecanoyl-2-(5Z,8Z,11Z,14Z-eicosatetraenoyl)-sn-glycero-3-phosphoethanolamine + H2O = 2-(5Z,8Z,11Z,14Z)-eicosatetraenoyl-sn-glycero-3-phosphoethanolamine + hexadecanoate + H(+). The catalysed reaction is 1-hexanoyl-2-acyl-sn-glycero-3-phosphocholine + H2O = hexanoate + a 2-acyl-sn-glycero-3-phosphocholine + H(+). It carries out the reaction 1,2-diheptadecanoyl-sn-glycero-3-phosphoethanolamine + 1-(9Z-octadecenoyl)-2-hexadecanoyl-sn-glycero-3-phosphocholine = 1,2-diheptadecanoyl-sn-glycero-3-phospho-N-hexadecanoyl-ethanolamine + 1-(9Z-octadecenoyl)-sn-glycero-3-phosphocholine + H(+). The enzyme catalyses 1,2-diheptadecanoyl-sn-glycero-3-phosphoethanolamine + 1-(9Z-octadecenoyl)-2-hexadecanoyl-sn-glycero-3-phosphocholine = 1,2-diheptadecanoyl-sn-glycero-3-phospho-N-(9Z-octadecenoyl)-ethanolamine + 2-hexadecanoyl-sn-glycero-3-phosphocholine + H(+). Functionally, exhibits both phospholipase A1/2 and acyltransferase activities. Shows phospholipase A1 (PLA1) and A2 (PLA2), catalyzing the calcium-independent release of fatty acids from the sn-1 or sn-2 position of glycerophospholipids. For most substrates, PLA1 activity is much higher than PLA2 activity. Shows O-acyltransferase activity, catalyzing the transfer of a fatty acyl group from glycerophospholipid to the hydroxyl group of lysophospholipid. Shows N-acyltransferase activity, catalyzing the calcium-independent transfer of a fatty acyl group at the sn-1 position of phosphatidylcholine (PC) and other glycerophospholipids to the primary amine of phosphatidylethanolamine (PE), forming N-acylphosphatidylethanolamine (NAPE), which serves as precursor for N-acylethanolamines (NAEs). Promotes keratinocyte differentiation via activation of TGM1. The sequence is that of Phospholipase A and acyltransferase 4 from Homo sapiens (Human).